Reading from the N-terminus, the 130-residue chain is Small ribosomal subunit protein bS18 (130 aa).

Basic and acidic residues-rich tracts occupy residues 98–108 (KKMEESVKSAE) and 117–130 (EESK…AKTE). Residues 98 to 130 (KKMEESVKSAEPKATAEATEESKPKRTRKAKTE) form a disordered region.

The protein belongs to the bacterial ribosomal protein bS18 family. As to quaternary structure, part of the 30S ribosomal subunit. Forms a tight heterodimer with protein bS6.

Functionally, binds as a heterodimer with protein bS6 to the central domain of the 16S rRNA, where it helps stabilize the platform of the 30S subunit. The protein is Small ribosomal subunit protein bS18 of Metamycoplasma arthritidis (strain 158L3-1) (Mycoplasma arthritidis).